The following is an 816-amino-acid chain: MRYDFSTIEKKWQSFWLKNNSFSSGESTDKPKYYVLDMFPYPSGSGLHVGHLEGYTATDIVARYKRSCGYNVLHPMGWDAFGLPAEQFAIKTGTHPKNTTEKNISSFRETLQAMGFSYDWSREINTTSPDYFRWTQWIFIKLYELGLAYVSEVDINWCEELKTVLANEEVEEKVKEGYTVIRKPLRQWVLKITAYAERLLDDLDELDWPENVKQMQRNWIGRSEGMEIDFELRCHNRKLRVYTTRPDTLFGATFLVISPEHPLALKLATAQQLVAVTQYIKEAKLKSELERTGLQKDKTGIFTGSFAINPATGDPLPVWISDFVLTSYGTGAIMSVPAHDSRDWEFAKKFGLPIIEVIKSPDGVDDAAFEGKESVSINSSNPEISIDGLHFSEAFQIMAHWLETKGLGERKVTYKLRDWIFSRQRYWGEPIPVKHYEDGSIRTESNLPLQLPEVEAYQPSETGESPLATMHDWLYGADEFGSFRRETNTMPQWAGSCWYYLRFIDPENNAQLIDPAKEKYWMNVDLYIGGAEHAVLHLLYARFWHKVLYDLGVVSSREPFKKLFNQGMILGEDNEKMSKSRGNVIPADQVLKDYGADAVRLYEMFLGPLEQVKPWNTNGIEGISRFLGKVWRLVYPDSENPDQRDQAAVLDENPLPEILQRRMHKTIKKVTEDTDHLKFNTAISEMMVFVNELQKNGCRQKSAVENLLLMLAPYAPHITAELWQAIGHTSPISAEPFPVFDPAIAEDPVVTIAVQVNGKLRGRFTAPAKSPEESLVDMAKHVDTVIKFLEGQTIVKEIVIQDKLVNFAVKQSIPNH.

The short motif at P40–H51 is the 'HIGH' region element. Residues K576–S580 carry the 'KMSKS' region motif. K579 provides a ligand contact to ATP.

Belongs to the class-I aminoacyl-tRNA synthetase family.

It is found in the cytoplasm. It carries out the reaction tRNA(Leu) + L-leucine + ATP = L-leucyl-tRNA(Leu) + AMP + diphosphate. In Chlorobium phaeobacteroides (strain DSM 266 / SMG 266 / 2430), this protein is Leucine--tRNA ligase.